A 340-amino-acid chain; its full sequence is Adenosine kinase (340 aa).

Asp-292 is a catalytic residue.

This sequence belongs to the carbohydrate kinase PfkB family. The cofactor is Mg(2+).

It carries out the reaction adenosine + ATP = AMP + ADP + H(+). It participates in purine metabolism; AMP biosynthesis via salvage pathway; AMP from adenosine: step 1/1. This Schizosaccharomyces pombe (strain 972 / ATCC 24843) (Fission yeast) protein is Adenosine kinase (ado1).